Consider the following 103-residue polypeptide: Thioredoxin-1 (103 aa).

A Thioredoxin domain is found at 2 to 103; that stretch reads VKQVSDSSEF…KLEASIKANL (102 aa). Residues Cys30 and Cys33 each act as nucleophile in the active site. Cys30 and Cys33 are disulfide-bonded.

Belongs to the thioredoxin family.

Its function is as follows. Participates in various redox reactions through the reversible oxidation of its active center dithiol to a disulfide and catalyzes dithiol-disulfide exchange reactions. This chain is Thioredoxin-1 (trx1), found in Schizosaccharomyces pombe (strain 972 / ATCC 24843) (Fission yeast).